The following is a 213-amino-acid chain: NADH-quinone oxidoreductase subunit B 1 (213 aa).

Residues Cys82, Cys83, Cys148, and Cys177 each coordinate [4Fe-4S] cluster.

Belongs to the complex I 20 kDa subunit family. In terms of assembly, NDH-1 is composed of 14 different subunits. Subunits NuoB, C, D, E, F, and G constitute the peripheral sector of the complex. [4Fe-4S] cluster is required as a cofactor.

It is found in the cell inner membrane. The enzyme catalyses a quinone + NADH + 5 H(+)(in) = a quinol + NAD(+) + 4 H(+)(out). Its function is as follows. NDH-1 shuttles electrons from NADH, via FMN and iron-sulfur (Fe-S) centers, to quinones in the respiratory chain. The immediate electron acceptor for the enzyme in this species is believed to be ubiquinone. Couples the redox reaction to proton translocation (for every two electrons transferred, four hydrogen ions are translocated across the cytoplasmic membrane), and thus conserves the redox energy in a proton gradient. This Koribacter versatilis (strain Ellin345) protein is NADH-quinone oxidoreductase subunit B 1.